The following is a 127-amino-acid chain: Protein ApaG (127 aa).

The 125-residue stretch at 3–127 (NNPSSKIEVA…FVLSVPRTLH (125 aa)) folds into the ApaG domain.

The chain is Protein ApaG from Xylella fastidiosa (strain M23).